The sequence spans 485 residues: Glutamyl-tRNA(Gln) amidotransferase subunit A (485 aa).

Residues Lys-76 and Ser-151 each act as charge relay system in the active site. Catalysis depends on Ser-175, which acts as the Acyl-ester intermediate.

This sequence belongs to the amidase family. GatA subfamily. In terms of assembly, heterotrimer of A, B and C subunits.

The enzyme catalyses L-glutamyl-tRNA(Gln) + L-glutamine + ATP + H2O = L-glutaminyl-tRNA(Gln) + L-glutamate + ADP + phosphate + H(+). Functionally, allows the formation of correctly charged Gln-tRNA(Gln) through the transamidation of misacylated Glu-tRNA(Gln) in organisms which lack glutaminyl-tRNA synthetase. The reaction takes place in the presence of glutamine and ATP through an activated gamma-phospho-Glu-tRNA(Gln). The chain is Glutamyl-tRNA(Gln) amidotransferase subunit A from Methylococcus capsulatus (strain ATCC 33009 / NCIMB 11132 / Bath).